We begin with the raw amino-acid sequence, 901 residues long: Core protein VP3 (901 aa).

Belongs to the orbivirus VP3 family.

It localises to the virion. In terms of biological role, the VP3 protein is one of the five proteins (with VP1, VP4, VP6 and VP7) which form the inner capsid of the virus. This Antilocapra americana (Pronghorn) protein is Core protein VP3 (Segment-3).